Consider the following 454-residue polypeptide: tRNA modification GTPase MnmE (454 aa).

(6S)-5-formyl-5,6,7,8-tetrahydrofolate-binding residues include R23, E80, and K120. The 162-residue stretch at 216 to 377 folds into the TrmE-type G domain; that stretch reads GMKVVIAGRP…LRNHLKQSMG (162 aa). Position 226 (N226) interacts with K(+). Residues 226-231, 245-251, 270-273, 335-338, and 358-360 each bind GTP; these read NAGKSS, TDIAGTT, DTAG, NKAD, and SAR. Residue S230 participates in Mg(2+) binding. 3 residues coordinate K(+): T245, I247, and T250. T251 contacts Mg(2+). K454 contacts (6S)-5-formyl-5,6,7,8-tetrahydrofolate.

The protein belongs to the TRAFAC class TrmE-Era-EngA-EngB-Septin-like GTPase superfamily. TrmE GTPase family. As to quaternary structure, homodimer. Heterotetramer of two MnmE and two MnmG subunits. K(+) is required as a cofactor.

It is found in the cytoplasm. In terms of biological role, exhibits a very high intrinsic GTPase hydrolysis rate. Involved in the addition of a carboxymethylaminomethyl (cmnm) group at the wobble position (U34) of certain tRNAs, forming tRNA-cmnm(5)s(2)U34. The polypeptide is tRNA modification GTPase MnmE (Salmonella gallinarum (strain 287/91 / NCTC 13346)).